The following is a 251-amino-acid chain: Fibroblast growth factor 23 (251 aa).

A signal peptide spans 1–24; sequence MLGACLRLLVGALCTVCSLGTARA. An intrachain disulfide couples Cys-95 to Cys-113. O-linked (GalNAc) threonine glycans are attached at residues Thr-171 and Thr-178. A disordered region spans residues 175–251; that stretch reads RRHTRSAEDP…DRCRPFPRFV (77 aa). A compositionally biased stretch (basic and acidic residues) spans 179–189; the sequence is RSAEDPPERDP. A Phosphoserine; by FAM20C modification is found at Ser-180.

The protein belongs to the heparin-binding growth factors family. Interacts with FGFR1, FGFR2, FGFR3 and FGFR4. Affinity between fibroblast growth factors (FGFs) and their receptors is increased by KL and heparan sulfate glycosaminoglycans that function as coreceptors. Post-translationally, following secretion this protein is inactivated by cleavage into a N-terminal fragment and a C-terminal fragment. The processing is effected by proprotein convertases. O-glycosylated at Thr-171 and Thr-178 by GALNT3 and glycosylation of Thr-178 requires previous glycosylation at Thr171. Glycosylation is necessary for secretion; it blocks processing by proprotein convertases when the O-glycan is alpha 2,6-sialylated. Competition between proprotein convertase cleavage and block of cleavage by O-glycosylation determines the level of secreted active FGF23. In terms of processing, phosphorylation at Ser-180 mediated by FAM20C slows down glycosylation at Thr-178 notably. In terms of tissue distribution, expressed in the parathyroid.

It localises to the secreted. Regulator of phosphate homeostasis. Inhibits renal tubular phosphate transport by reducing SLC34A1 levels. Regulator of vitamin-D metabolism. Negatively regulates osteoblasts differentiation and matrix mineralization. Acts directly on the parathyroid to decrease PTH secretion. Up-regulates EGR1 expression in the presence of KL. The chain is Fibroblast growth factor 23 (Fgf23) from Rattus norvegicus (Rat).